We begin with the raw amino-acid sequence, 340 residues long: Uroporphyrinogen decarboxylase (340 aa).

Substrate-binding positions include 21-25, phenylalanine 40, aspartate 71, tyrosine 147, serine 202, and histidine 316; that span reads RQAGR.

The protein belongs to the uroporphyrinogen decarboxylase family. Homodimer.

The protein localises to the cytoplasm. The catalysed reaction is uroporphyrinogen III + 4 H(+) = coproporphyrinogen III + 4 CO2. The protein operates within porphyrin-containing compound metabolism; protoporphyrin-IX biosynthesis; coproporphyrinogen-III from 5-aminolevulinate: step 4/4. In terms of biological role, catalyzes the decarboxylation of four acetate groups of uroporphyrinogen-III to yield coproporphyrinogen-III. The polypeptide is Uroporphyrinogen decarboxylase (Wolinella succinogenes (strain ATCC 29543 / DSM 1740 / CCUG 13145 / JCM 31913 / LMG 7466 / NCTC 11488 / FDC 602W) (Vibrio succinogenes)).